A 426-amino-acid chain; its full sequence is Pyrophosphate--fructose 6-phosphate 1-phosphotransferase 2 (426 aa).

Gly-15 contacts diphosphate. A Mg(2+)-binding site is contributed by Asp-114. Residues 140 to 142, 186 to 188, Glu-247, and 308 to 311 each bind substrate; these read TID, MGR, and YELR. Asp-142 serves as the catalytic Proton acceptor.

It belongs to the phosphofructokinase type A (PFKA) family. PPi-dependent PFK group II subfamily. Clade 'Short' sub-subfamily. Homotetramer. Requires Mg(2+) as cofactor.

Its subcellular location is the cytoplasm. The catalysed reaction is beta-D-fructose 6-phosphate + diphosphate = beta-D-fructose 1,6-bisphosphate + phosphate + H(+). The protein operates within carbohydrate degradation; glycolysis; D-glyceraldehyde 3-phosphate and glycerone phosphate from D-glucose: step 3/4. Non-allosteric. Catalyzes the phosphorylation of D-fructose 6-phosphate, the first committing step of glycolysis. Uses inorganic phosphate (PPi) as phosphoryl donor instead of ATP like common ATP-dependent phosphofructokinases (ATP-PFKs), which renders the reaction reversible, and can thus function both in glycolysis and gluconeogenesis. Consistently, PPi-PFK can replace the enzymes of both the forward (ATP-PFK) and reverse (fructose-bisphosphatase (FBPase)) reactions. The chain is Pyrophosphate--fructose 6-phosphate 1-phosphotransferase 2 (pfk2) from Trichomonas vaginalis (strain ATCC PRA-98 / G3).